The following is a 192-amino-acid chain: MTITISAVILAGGKARRMGGQDKGLQILGKQSLIEHIINRLQPQIHQISINANRNQTEYAKFGFPVFSDELPDFQGPLSGMLTALEKTKSDFILFTPCDTPFFPMNLLDKLKSAVKNDRTLIAYACDEEREHPVFCLMSVQLKEKLRHYLASGERRLLQFMKENGGISVKFTQEEGNFENFNTLDDLKKTVI.

GTP-binding positions include 10–12 (LAG), Lys23, Asn51, Asp69, and Asp99. A Mg(2+)-binding site is contributed by Asp99.

This sequence belongs to the MobA family. In terms of assembly, monomer. It depends on Mg(2+) as a cofactor.

Its subcellular location is the cytoplasm. The catalysed reaction is Mo-molybdopterin + GTP + H(+) = Mo-molybdopterin guanine dinucleotide + diphosphate. Transfers a GMP moiety from GTP to Mo-molybdopterin (Mo-MPT) cofactor (Moco or molybdenum cofactor) to form Mo-molybdopterin guanine dinucleotide (Mo-MGD) cofactor. This chain is Molybdenum cofactor guanylyltransferase, found in Haemophilus influenzae (strain ATCC 51907 / DSM 11121 / KW20 / Rd).